Here is a 381-residue protein sequence, read N- to C-terminus: Neuropeptide Y receptor type 2 (381 aa).

Residues 1-35 form a disordered region; that stretch reads MGPIGTEADENQTVEEMKVEQYGPQTTPRGELVPD. Topologically, residues 1–51 are extracellular; it reads MGPIGTEADENQTVEEMKVEQYGPQTTPRGELVPDPEPELIDSTKLIEVQV. Asn11 is a glycosylation site (N-linked (GlcNAc...) asparagine). A helical transmembrane segment spans residues 52–72; it reads VLILAYCSIILLGVIGNSLVI. Residues 73-86 lie on the Cytoplasmic side of the membrane; sequence HVVIKFKSMRTVTN. Residues 87 to 107 form a helical membrane-spanning segment; it reads FFIANLAVADLVVNTLCLPFT. At 108 to 124 the chain is on the extracellular side; that stretch reads LTYTLMGEWKMGPVLCH. A disulfide bridge connects residues Cys123 and Cys203. The helical transmembrane segment at 125-145 threads the bilayer; it reads LVPYAQGLAVQVSTITLTVIA. At 146–165 the chain is on the cytoplasmic side; it reads LDRHRCIVYHLESKISKRIS. Residues 166–186 form a helical membrane-spanning segment; sequence FLIIGLAWGISALLASPLAIF. Topologically, residues 187–216 are extracellular; sequence REYSLIEIIPDFEIVACTEKWPGEEKSIYG. Residues 217-237 traverse the membrane as a helical segment; the sequence is TVYSLSSLLILYVLPLGIISF. Topologically, residues 238–268 are cytoplasmic; it reads SYTRIWSKLKSHVSPGAANDHYHQRRQKTTK. A helical transmembrane segment spans residues 269 to 289; sequence MLVCVVVVFAVSWLPLHAFQL. At 290–304 the chain is on the extracellular side; the sequence is AVDIDSHVLDLKEYK. Residues 305–325 traverse the membrane as a helical segment; the sequence is LIFTVFHIIAMCSTFANPLLY. Topologically, residues 326 to 381 are cytoplasmic; sequence GWMNSNYRKAFLSAFRCEQRLDAIHSEVSVTFKAKKNLEVRKNSGPNDSFTEATNV. Cys342 carries S-palmitoyl cysteine lipidation.

Belongs to the G-protein coupled receptor 1 family.

It is found in the cell membrane. Its function is as follows. Receptor for neuropeptide Y and peptide YY. This is Neuropeptide Y receptor type 2 (NPY2R) from Macaca mulatta (Rhesus macaque).